The following is a 399-amino-acid chain: Sphingosine-1-phosphate phosphatase 2 (399 aa).

4 helical membrane passes run 88-108 (YLFQ…FLPF), 121-141 (LIII…VLKW), 160-180 (YGMP…LLIS), and 185-205 (YQYP…LVCL). The tract at residues 136 to 144 (KDVLKWPRP) is phosphatase sequence motif I. Positions 163–166 (PSTH) are phosphatase sequence motif II. Residue His-166 is the Proton donor of the active site. Residues 206 to 217 (SRLYTGMHTVLD) are phosphatase sequence motif III. The active-site Nucleophile is the His-213. The next 5 membrane-spanning stretches (helical) occupy residues 219 to 239 (LGGV…WTFI), 247 to 267 (PLFP…YPVS), 280 to 300 (ILAA…FQLV), 318 to 338 (TYML…ILLV), and 371 to 391 (VPYK…FVPM).

Belongs to the type 2 lipid phosphate phosphatase family. In terms of tissue distribution, expressed strongly in kidney and heart, followed by brain, colon, small intestine and lung. Not detected in skeletal muscle, thymus, spleen, liver, placenta, and peripheral blood leukocytes.

It localises to the endoplasmic reticulum membrane. The catalysed reaction is sphinganine 1-phosphate + H2O = sphinganine + phosphate. It carries out the reaction sphing-4-enine 1-phosphate + H2O = sphing-4-enine + phosphate. The enzyme catalyses (4R)-hydroxysphinganine 1-phosphate + H2O = (4R)-hydroxysphinganine + phosphate. Has specific phosphohydrolase activity towards sphingoid base 1-phosphates. Has high phosphohydrolase activity against dihydrosphingosine-1-phosphate and sphingosine-1-phosphate (S1P) in vitro. Sphingosine-1-phosphate phosphatase activity is needed for efficient recycling of sphingosine into the sphingolipid synthesis pathway. May play a role in attenuating intracellular sphingosine 1-phosphate (S1P) signaling. May play a role in pro-inflammatory signaling. Plays a role in the regulation of pancreatic islet beta-cell endoplasmic reticulum stress and proliferation. The sequence is that of Sphingosine-1-phosphate phosphatase 2 from Homo sapiens (Human).